The chain runs to 248 residues: Triosephosphate isomerase (248 aa).

Substrate is bound at residue 14 to 16 (NWK). Catalysis depends on H99, which acts as the Electrophile. E170 (proton acceptor) is an active-site residue. Substrate is bound by residues G176, S212, and 233-234 (GG).

Belongs to the triosephosphate isomerase family. Homodimer.

The protein resides in the cytoplasm. It carries out the reaction D-glyceraldehyde 3-phosphate = dihydroxyacetone phosphate. It participates in carbohydrate biosynthesis; gluconeogenesis. The protein operates within carbohydrate degradation; glycolysis; D-glyceraldehyde 3-phosphate from glycerone phosphate: step 1/1. Functionally, involved in the gluconeogenesis. Catalyzes stereospecifically the conversion of dihydroxyacetone phosphate (DHAP) to D-glyceraldehyde-3-phosphate (G3P). This Bordetella bronchiseptica (strain ATCC BAA-588 / NCTC 13252 / RB50) (Alcaligenes bronchisepticus) protein is Triosephosphate isomerase.